The primary structure comprises 92 residues: YcgL domain-containing protein Sbal_1869 (92 aa).

The YcgL domain maps to 1-85; sequence MLCAVYKSSR…PQVNLLAEHK (85 aa).

This Shewanella baltica (strain OS155 / ATCC BAA-1091) protein is YcgL domain-containing protein Sbal_1869.